A 319-amino-acid polypeptide reads, in one-letter code: ATP-dependent 6-phosphofructokinase (319 aa).

Gly11 lines the ATP pocket. Arg21–Arg25 is an ADP binding site. ATP-binding positions include Arg72–Cys73 and Gly102–Ser105. Asp103 contributes to the Mg(2+) binding site. Thr125–Asp127 is a binding site for substrate. Asp127 acts as the Proton acceptor in catalysis. Position 154 (Arg154) interacts with ADP. Substrate-binding positions include Arg162 and Met169–Arg171. Residues Gly185–Glu187, Arg211, and Lys213–His215 each bind ADP. Substrate-binding positions include Glu222, Lys243, and His249–Arg252.

The protein belongs to the phosphofructokinase type A (PFKA) family. ATP-dependent PFK group I subfamily. Prokaryotic clade 'B1' sub-subfamily. In terms of assembly, homotetramer. Mg(2+) is required as a cofactor.

It localises to the cytoplasm. It catalyses the reaction beta-D-fructose 6-phosphate + ATP = beta-D-fructose 1,6-bisphosphate + ADP + H(+). The protein operates within carbohydrate degradation; glycolysis; D-glyceraldehyde 3-phosphate and glycerone phosphate from D-glucose: step 3/4. Allosterically activated by ADP and other diphosphonucleosides, and allosterically inhibited by phosphoenolpyruvate. Functionally, catalyzes the phosphorylation of D-fructose 6-phosphate to fructose 1,6-bisphosphate by ATP, the first committing step of glycolysis. In Finegoldia magna (strain ATCC 29328 / DSM 20472 / WAL 2508) (Peptostreptococcus magnus), this protein is ATP-dependent 6-phosphofructokinase.